Reading from the N-terminus, the 534-residue chain is Calmodulin calcium-dependent NAD kinase (534 aa).

Residues 167–196 (QKVPKLKDFVMAATRKQRFERVTKDLKVKR) form a calmodulin-binding region. 238 to 245 (GGMGAGKS) is a binding site for ATP.

Interacts with calmodulin (CaM) in a calcium Ca(2+)-dependent manner in vitro. Ca(2+) is required as a cofactor.

Its subcellular location is the mitochondrion outer membrane. The enzyme catalyses NAD(+) + ATP = ADP + NADP(+) + H(+). In terms of biological role, phosphorylates NAD(+) to produce NADP(+) in a calmodulin calcium-dependent manner. Does not possess activity toward NADH. Has broad specificity for the phosphoryl donor, as ATP, CTP, GTP and UTP can be used interchangeably and produce similar efficiencies. May play a role in producing NADP(H) needed to regulate the elicitor-induced reactive oxygen species (ROS) burst by sustaining the activity of NADPH oxidases. Does not seem to play a role in photosynthesis-driven growth. This chain is Calmodulin calcium-dependent NAD kinase, found in Arabidopsis thaliana (Mouse-ear cress).